A 117-amino-acid polypeptide reads, in one-letter code: Large ribosomal subunit protein uL18 (117 aa).

It belongs to the universal ribosomal protein uL18 family. In terms of assembly, part of the 50S ribosomal subunit; part of the 5S rRNA/L5/L18/L25 subcomplex. Contacts the 5S and 23S rRNAs.

Functionally, this is one of the proteins that bind and probably mediate the attachment of the 5S RNA into the large ribosomal subunit, where it forms part of the central protuberance. This chain is Large ribosomal subunit protein uL18, found in Vibrio cholerae serotype O1 (strain ATCC 39541 / Classical Ogawa 395 / O395).